Consider the following 311-residue polypeptide: Probable lipid kinase YegS-like (311 aa).

Residues glutamate 9–tyrosine 140 form the DAGKc domain. ATP-binding positions include threonine 47, glycine 73 to glutamate 79, and serine 102. Positions 221, 224, and 226 each coordinate Mg(2+). The active-site Proton acceptor is glutamate 281.

The protein belongs to the diacylglycerol/lipid kinase family. YegS lipid kinase subfamily. Mg(2+) is required as a cofactor. Ca(2+) serves as cofactor.

Its subcellular location is the cytoplasm. Probably phosphorylates lipids; the in vivo substrate is unknown. In Chromohalobacter salexigens (strain ATCC BAA-138 / DSM 3043 / CIP 106854 / NCIMB 13768 / 1H11), this protein is Probable lipid kinase YegS-like.